We begin with the raw amino-acid sequence, 131 residues long: Large ribosomal subunit protein uL24 (131 aa).

It belongs to the universal ribosomal protein uL24 family. In terms of assembly, part of the 50S ribosomal subunit.

Functionally, one of two assembly initiator proteins, it binds directly to the 5'-end of the 23S rRNA, where it nucleates assembly of the 50S subunit. Its function is as follows. Located at the polypeptide exit tunnel on the outside of the subunit. The protein is Large ribosomal subunit protein uL24 of Korarchaeum cryptofilum (strain OPF8).